We begin with the raw amino-acid sequence, 169 residues long: Pyrophosphate-energized proton pump 1 (169 aa).

3 helical membrane passes run 45 to 65, 114 to 134, and 141 to 161; these read YVVA…GIAM, VIPS…VLLI, and AFAA…LVAI.

Belongs to the H(+)-translocating pyrophosphatase (TC 3.A.10) family. Homodimer. Mg(2+) is required as a cofactor.

Its subcellular location is the cell inner membrane. It carries out the reaction diphosphate + H2O + H(+)(in) = 2 phosphate + 2 H(+)(out). Proton pump that utilizes the energy of pyrophosphate hydrolysis as the driving force for proton movement across the membrane. Generates a proton motive force. This Rhizobium leguminosarum bv. trifolii protein is Pyrophosphate-energized proton pump 1 (hppA1).